The chain runs to 194 residues: Auxin-induced protein 22A (194 aa).

The short motif at Leu13–Leu17 is the EAR-like (transcriptional repression) element. Residues Glu40 to Lys62 are disordered. The region spanning Lys85 to Asp173 is the PB1 domain.

Belongs to the Aux/IAA family. As to quaternary structure, homodimers and heterodimers.

Its subcellular location is the nucleus. Functionally, aux/IAA proteins are short-lived transcriptional factors that function as repressors of early auxin response genes at low auxin concentrations. Repression is thought to result from the interaction with auxin response factors (ARFs), proteins that bind to the auxin-responsive promoter element (AuxRE). Formation of heterodimers with ARF proteins may alter their ability to modulate early auxin response genes expression. This Vigna radiata var. radiata (Mung bean) protein is Auxin-induced protein 22A (AUX22A).